We begin with the raw amino-acid sequence, 465 residues long: E3 ubiquitin-protein ligase TRIM38 (465 aa).

An RING-type zinc finger spans residues 16–63 (CSICLSLMTNPVSINCGHSYCHLCITDFFKNPSQKQLRQETFCCPQCR). At Ser70 the chain carries Phosphoserine. A B box-type zinc finger spans residues 88–129 (DQEMSCEEHGEQFHLFCEDEGQLICWRCERAPQHKGHTTALV). Zn(2+) contacts are provided by Cys93, His96, Cys115, and His121. The B30.2/SPRY domain occupies 274–465 (CNVSKLYFDV…SPLFLPPPGD (192 aa)).

As to quaternary structure, interacts (via B30.2/SPRY domain) with TAB2 and TAB3. Ubiquitous.

The protein resides in the cytoplasm. The catalysed reaction is S-ubiquitinyl-[E2 ubiquitin-conjugating enzyme]-L-cysteine + [acceptor protein]-L-lysine = [E2 ubiquitin-conjugating enzyme]-L-cysteine + N(6)-ubiquitinyl-[acceptor protein]-L-lysine.. It participates in protein modification; protein ubiquitination. Its pathway is protein modification; protein sumoylation. Its function is as follows. E3 ubiquitin-protein and E3 SUMO-protein ligase that acts as a regulator of innate immunity. Acts as a negative regulator of type I interferon IFN-beta production by catalyzing 'Lys-48'-linked polyubiquitination of AZI2/NAP1, leading to its degradation. Mediates 'Lys-48'-linked polyubiquitination and proteasomal degradation of the critical TLR adapter TICAM1, inhibiting TLR3-mediated type I interferon signaling. Acts as positive regulator of the cGAS-STING pathway by acting as a E3 SUMO-protein ligase: mediates sumoylation of CGAS and STING, preventing their degradation and thereby activating the innate immune response to DNA virus. Also acts as a negative regulator of NF-kappa-B signaling independently of its E3 protein ligase activity by promoting lysosome-dependent degradation of TAB2 and TAB3 adapters. This chain is E3 ubiquitin-protein ligase TRIM38, found in Homo sapiens (Human).